The following is a 278-amino-acid chain: Betaine--homocysteine S-methyltransferase 1 (278 aa).

In terms of domain architecture, Hcy-binding spans 11 to 278; the sequence is KGILERLNSG…FGLEPRVATR (268 aa). N6-succinyllysine occurs at positions 40, 93, and 98. Zn(2+) is bound at residue C217. Residues K232 and K241 each carry the N6-succinyllysine modification.

In terms of assembly, homotetramer. Zn(2+) serves as cofactor. In terms of tissue distribution, found exclusively in liver and kidney.

It is found in the cytoplasm. The protein resides in the cytosol. The protein localises to the nucleus. It carries out the reaction L-homocysteine + glycine betaine = N,N-dimethylglycine + L-methionine. It functions in the pathway amine and polyamine degradation; betaine degradation; sarcosine from betaine: step 1/2. It participates in amino-acid biosynthesis; L-methionine biosynthesis via de novo pathway; L-methionine from L-homocysteine (BhmT route): step 1/1. With respect to regulation, inhibited by dimethylglycine and methylthioacetate. Functionally, involved in the regulation of homocysteine metabolism. Converts betaine and homocysteine to dimethylglycine and methionine, respectively. This reaction is also required for the irreversible oxidation of choline. This is Betaine--homocysteine S-methyltransferase 1 from Sus scrofa (Pig).